Consider the following 151-residue polypeptide: Ribosomal RNA large subunit methyltransferase H (151 aa).

Residues Leu73, Gly100, and 119 to 124 (LSKMTM) contribute to the S-adenosyl-L-methionine site.

This sequence belongs to the RNA methyltransferase RlmH family. Homodimer.

It localises to the cytoplasm. It catalyses the reaction pseudouridine(1915) in 23S rRNA + S-adenosyl-L-methionine = N(3)-methylpseudouridine(1915) in 23S rRNA + S-adenosyl-L-homocysteine + H(+). Specifically methylates the pseudouridine at position 1915 (m3Psi1915) in 23S rRNA. This Campylobacter concisus (strain 13826) protein is Ribosomal RNA large subunit methyltransferase H.